The primary structure comprises 353 residues: Rhodopsin (353 aa).

The Extracellular portion of the chain corresponds to 1–36 (MNGTEGPYFYIPMVNTTGIVRSPYEYPQYYLVNPAA). N-linked (GlcNAc...) asparagine glycans are attached at residues Asn2 and Asn15. The helical transmembrane segment at 37–61 (YAALGAYMFLLILVGFPINFLTLYV) threads the bilayer. At 62 to 73 (TIEHKKLRTPLN) the chain is on the cytoplasmic side. Residues 74-96 (YILLNLAVANLFMVFGGFTTTMY) form a helical membrane-spanning segment. Residues 97–110 (TSMHGYFVLGRLGC) lie on the Extracellular side of the membrane. A disulfide bridge connects residues Cys110 and Cys187. Residues 111-133 (NLEGFFATLGGEIALWSLVVLAI) traverse the membrane as a helical segment. Residues 134–136 (ERW) carry the 'Ionic lock' involved in activated form stabilization motif. The Cytoplasmic segment spans residues 134 to 152 (ERWMVVCKPISNFRFGEDH). The chain crosses the membrane as a helical span at residues 153–173 (AIMGLAFTWVMAAACAVPPLV). Residues 174–202 (GWSRYIPEGMQCSCGIDYYTRAEGFNNES) lie on the Extracellular side of the membrane. Asn200 carries an N-linked (GlcNAc...) asparagine glycan. Residues 203-224 (FVIYMFVCHFLIPLVVVFFCYG) form a helical membrane-spanning segment. At 225-252 (RLLCAVKEAAAAQQESETTQRAEREVSR) the chain is on the cytoplasmic side. Residues 253 to 274 (MVVIMVVAFLICWCPYAGVAWY) traverse the membrane as a helical segment. Residues 275–286 (IFTHQGSEFGPL) lie on the Extracellular side of the membrane. The chain crosses the membrane as a helical span at residues 287-308 (FMTFPAFFAKSSSIYNPMIYIC). Lys296 is modified (N6-(retinylidene)lysine). Topologically, residues 309–353 (MNKQFRHCMITTLCCGKNPFEEEEGASTTSKTEASSVSSSSVSPA) are cytoplasmic. Residues Cys322 and Cys323 are each lipidated (S-palmitoyl cysteine). The segment at 330–353 (EEEGASTTSKTEASSVSSSSVSPA) is disordered. Low complexity predominate over residues 334–353 (ASTTSKTEASSVSSSSVSPA).

Belongs to the G-protein coupled receptor 1 family. Opsin subfamily. Phosphorylated on some or all of the serine and threonine residues present in the C-terminal region. In terms of processing, contains one covalently linked retinal chromophore.

It is found in the membrane. Its subcellular location is the cell projection. It localises to the cilium. The protein localises to the photoreceptor outer segment. Functionally, photoreceptor required for image-forming vision at low light intensity. While most salt water fish species use retinal as chromophore, most freshwater fish use 3-dehydroretinal, or a mixture of retinal and 3-dehydroretinal. Light-induced isomerization of 11-cis to all-trans retinal triggers a conformational change that activates signaling via G-proteins. Subsequent receptor phosphorylation mediates displacement of the bound G-protein alpha subunit by arrestin and terminates signaling. This Chelon saliens (Leaping mullet) protein is Rhodopsin (rho).